The chain runs to 132 residues: 3-aminoacrylate deaminase RutC (132 aa).

Belongs to the RutC family.

The enzyme catalyses (Z)-3-aminoacrylate + H2O + H(+) = 3-oxopropanoate + NH4(+). Involved in pyrimidine catabolism. Catalyzes the deamination of 3-aminoacrylate to malonic semialdehyde, a reaction that can also occur spontaneously. RutC may facilitate the reaction and modulate the metabolic fitness, rather than catalyzing essential functions. The protein is 3-aminoacrylate deaminase RutC of Cronobacter turicensis (strain DSM 18703 / CCUG 55852 / LMG 23827 / z3032).